Consider the following 580-residue polypeptide: Putative Xaa-Pro dipeptidyl-peptidase (580 aa).

Active-site charge relay system residues include S207, D319, and H350.

Belongs to the peptidase S15 family.

The catalysed reaction is Hydrolyzes Xaa-Pro-|- bonds to release unblocked, N-terminal dipeptides from substrates including Ala-Pro-|-p-nitroanilide and (sequentially) Tyr-Pro-|-Phe-Pro-|-Gly-Pro-|-Ile.. The polypeptide is Putative Xaa-Pro dipeptidyl-peptidase (Bacillus cereus (strain ATCC 14579 / DSM 31 / CCUG 7414 / JCM 2152 / NBRC 15305 / NCIMB 9373 / NCTC 2599 / NRRL B-3711)).